A 515-amino-acid chain; its full sequence is 2,3-bisphosphoglycerate-independent phosphoglycerate mutase (515 aa).

Positions 14 and 64 each coordinate Mn(2+). Ser-64 functions as the Phosphoserine intermediate in the catalytic mechanism. Residues His-125, 155-156 (RD), Arg-187, Arg-193, 263-266 (RADR), and Lys-337 contribute to the substrate site. Residues Asp-404, His-408, Asp-445, His-446, and His-464 each contribute to the Mn(2+) site.

Belongs to the BPG-independent phosphoglycerate mutase family. In terms of assembly, monomer. It depends on Mn(2+) as a cofactor.

The enzyme catalyses (2R)-2-phosphoglycerate = (2R)-3-phosphoglycerate. It participates in carbohydrate degradation; glycolysis; pyruvate from D-glyceraldehyde 3-phosphate: step 3/5. Catalyzes the interconversion of 2-phosphoglycerate and 3-phosphoglycerate. The polypeptide is 2,3-bisphosphoglycerate-independent phosphoglycerate mutase (Pseudomonas paraeruginosa (strain DSM 24068 / PA7) (Pseudomonas aeruginosa (strain PA7))).